The sequence spans 104 residues: MADASIQIEVVYASVQRQVLKTVDVPTGSSVRQALALSGIDKEFPELDLSQCAVGIFGKVVTDPAARVLEAGERIEIYRLLVADPMEIRRLRAARAREKRGLPG.

The protein belongs to the UPF0125 (RnfH) family.

The chain is Protein RnfH from Pseudomonas syringae pv. syringae (strain B728a).